A 369-amino-acid polypeptide reads, in one-letter code: Anhydro-N-acetylmuramic acid kinase (369 aa).

12–19 lines the ATP pocket; it reads GTSMDGVD.

The protein belongs to the anhydro-N-acetylmuramic acid kinase family.

The catalysed reaction is 1,6-anhydro-N-acetyl-beta-muramate + ATP + H2O = N-acetyl-D-muramate 6-phosphate + ADP + H(+). Its pathway is amino-sugar metabolism; 1,6-anhydro-N-acetylmuramate degradation. It functions in the pathway cell wall biogenesis; peptidoglycan recycling. In terms of biological role, catalyzes the specific phosphorylation of 1,6-anhydro-N-acetylmuramic acid (anhMurNAc) with the simultaneous cleavage of the 1,6-anhydro ring, generating MurNAc-6-P. Is required for the utilization of anhMurNAc either imported from the medium or derived from its own cell wall murein, and thus plays a role in cell wall recycling. The protein is Anhydro-N-acetylmuramic acid kinase of Shewanella sp. (strain MR-4).